Here is a 204-residue protein sequence, read N- to C-terminus: MNLFKNFLKEWGLFLLILSLLALSRIFFWSNVRVEGHSMDPTLADGEILFVVKHLPIDRFDIVVAHEEDGNKDIVKRVIGMPGDTIRYENDKLYINDKETDEPYLADYIKRFKDDKLQSTYSGKGFEGNKGTFFRSIAQKAQAFTVDVNYNTNFSFTVPEGEYLLLGDDRLVSSDSRHVGTFKAKDITGEAKFRFWPITRIGTF.

Over 1–10 (MNLFKNFLKE) the chain is Cytoplasmic. A helical transmembrane segment spans residues 11-30 (WGLFLLILSLLALSRIFFWS). Topologically, residues 31–204 (NVRVEGHSMD…FWPITRIGTF (174 aa)) are extracellular. Active-site residues include S38 and K76.

This sequence belongs to the peptidase S26 family.

The protein resides in the cell membrane. It catalyses the reaction Cleavage of hydrophobic, N-terminal signal or leader sequences from secreted and periplasmic proteins.. This is Signal peptidase I (lepB) from Streptococcus pneumoniae (strain ATCC BAA-255 / R6).